Reading from the N-terminus, the 560-residue chain is uncharacterized protein (560 aa).

The Cytoplasmic segment spans residues 1 to 17 (MEPKRKSGSLAKHDLPQ). A helical transmembrane segment spans residues 18–38 (FYLLIMLYLAQGIPVGLAFGT). Over 39–54 (VPFLLKSLAKETSFTS) the chain is Extracellular. Residues 55-75 (LGIFSMATYPYSLKIIWSPIV) form a helical membrane-spanning segment. Over 76–88 (DSLYNKRIGRRRS) the chain is Cytoplasmic. A helical membrane pass occupies residues 89–109 (WIIPVQFVSGFVLWALGWCIS). Residues 110–139 (QGIIFDGVDDAFHNRGNGTLHSVSIKNLTW) lie on the Extracellular side of the membrane. A helical membrane pass occupies residues 140 to 160 (WFGLLVFLCATQDIAVDGWAL). The Cytoplasmic segment spans residues 161-172 (TILSKESLSYAS). Residues 173 to 193 (TAQTIGLNIGYFMSFTIFLSL) form a helical membrane-spanning segment. Topologically, residues 194–214 (NSSDFANKYFRNIPLDHGFIS) are extracellular. Residues 215 to 235 (LGGYMKFSGMLYIVITIYIIF) form a helical membrane-spanning segment. Over 236-329 (CTKEKPYVEY…KLLEQGFKRE (94 aa)) the chain is Cytoplasmic. Residues 330–350 (DLAVTVLIDLPFEIIFGYYVV) form a helical membrane-spanning segment. Over 351–374 (KWSSDKDPMIRDNRRLRNSTGTNK) the chain is Extracellular. Residues 375 to 395 (VIKFLVGDAGVLTPWLWGFLG) traverse the membrane as a helical segment. Over 396 to 421 (RLAAAVLGSYVVKQFPKDGEISTGYF) the chain is Cytoplasmic. Residues 422–442 (CLVIFQHLLGSFMNTVQFIGI) form a helical membrane-spanning segment. Over 443 to 521 (SAFHTRVADP…LNGTVTILRD (79 aa)) the chain is Extracellular. A helical membrane pass occupies residues 522–542 (GYYITNLICIVVGLFLYFGYL). The Cytoplasmic segment spans residues 543-560 (KRKILHLQSLPISSWRCT).

The protein localises to the membrane. This is an uncharacterized protein from Saccharomyces cerevisiae (strain ATCC 204508 / S288c) (Baker's yeast).